Here is a 521-residue protein sequence, read N- to C-terminus: Bifunctional purine biosynthesis protein PurH (521 aa).

Residues 1–147 (MAKITRALIS…KNNADVTVLV (147 aa)) form the MGS-like domain.

Belongs to the PurH family.

It catalyses the reaction (6R)-10-formyltetrahydrofolate + 5-amino-1-(5-phospho-beta-D-ribosyl)imidazole-4-carboxamide = 5-formamido-1-(5-phospho-D-ribosyl)imidazole-4-carboxamide + (6S)-5,6,7,8-tetrahydrofolate. The catalysed reaction is IMP + H2O = 5-formamido-1-(5-phospho-D-ribosyl)imidazole-4-carboxamide. It functions in the pathway purine metabolism; IMP biosynthesis via de novo pathway; 5-formamido-1-(5-phospho-D-ribosyl)imidazole-4-carboxamide from 5-amino-1-(5-phospho-D-ribosyl)imidazole-4-carboxamide (10-formyl THF route): step 1/1. It participates in purine metabolism; IMP biosynthesis via de novo pathway; IMP from 5-formamido-1-(5-phospho-D-ribosyl)imidazole-4-carboxamide: step 1/1. In Geobacter sulfurreducens (strain ATCC 51573 / DSM 12127 / PCA), this protein is Bifunctional purine biosynthesis protein PurH.